We begin with the raw amino-acid sequence, 517 residues long: Type II methyltransferase M.CeqI (517 aa).

Disordered regions lie at residues 1-21 (MVVT…RWPR) and 33-62 (GRPR…HGRS). The span at 51–62 (RPRRGRAPHGRS) shows a compositional bias: basic residues. 3 TPR repeats span residues 283-316 (AEFY…FENN), 361-394 (ALLL…GDHS), and 476-509 (SELA…RTNM).

It carries out the reaction a 2'-deoxyadenosine in DNA + S-adenosyl-L-methionine = an N(6)-methyl-2'-deoxyadenosine in DNA + S-adenosyl-L-homocysteine + H(+). In terms of biological role, a methylase, recognizes the double-stranded sequence 5'-GATATC-3', methylates A-? on both strands, and protects the DNA from cleavage by the CeqI endonuclease. The polypeptide is Type II methyltransferase M.CeqI (ceqIM) (Rhodococcus hoagii (Corynebacterium equii)).